The sequence spans 630 residues: UvrABC system protein C (630 aa).

Positions 1–96 (MGAEGLQGEG…GEAHRRGGTG (96 aa)) are disordered. Residues 9–28 (EGEVPPQGAGVPGQVQVGVH) show a composition bias toward low complexity. Positions 52 to 125 (DPRGLPVEAG…IKAHRPLYNV (74 aa)) constitute a GIY-YIG domain. The segment covering 75-91 (RPGEKLLPRRGQGEAHR) has biased composition (basic and acidic residues). The UVR domain maps to 234 to 269 (DGLLQELEAKMREAARRLEFERAAEIRDQMEALRAF).

It belongs to the UvrC family. In terms of assembly, interacts with UvrB in an incision complex.

It localises to the cytoplasm. In terms of biological role, the UvrABC repair system catalyzes the recognition and processing of DNA lesions. UvrC both incises the 5' and 3' sides of the lesion. The N-terminal half is responsible for the 3' incision and the C-terminal half is responsible for the 5' incision. The protein is UvrABC system protein C of Thermus thermophilus (strain ATCC BAA-163 / DSM 7039 / HB27).